The sequence spans 359 residues: Fe-S cluster assembly protein DRE2 (359 aa).

Residues 1 to 159 (MANILLLLHP…LFKKLSSNSN (159 aa)) form an N-terminal SAM-like domain region. The segment at 152–187 (KKLSSNSNNNNNSSSPIGLTDSSAANTDEETDEANV) is disordered. Residues 155–166 (SSNSNNNNNSSS) are compositionally biased toward low complexity. The linker stretch occupies residues 159–228 (NNNNNSSSPI…DDLIKDSNQL (70 aa)). Over residues 167–177 (PIGLTDSSAAN) the composition is skewed to polar residues. 4 residues coordinate [2Fe-2S] cluster: cysteine 240, cysteine 252, cysteine 255, and cysteine 257. Positions 240-257 (CEIPNGKKRRKACKDCTC) are fe-S binding site A. Residues cysteine 322, cysteine 325, cysteine 333, and cysteine 336 each coordinate [4Fe-4S] cluster. 2 consecutive short sequence motifs (cx2C motif) follow at residues 322-325 (CGSC) and 333-336 (CDGC). The tract at residues 322–336 (CGSCALGDAFRCDGC) is fe-S binding site B.

This sequence belongs to the anamorsin family. In terms of assembly, monomer. Interacts with TAH18. Interacts with MIA40. Requires [2Fe-2S] cluster as cofactor. It depends on [4Fe-4S] cluster as a cofactor.

It localises to the cytoplasm. The protein resides in the mitochondrion intermembrane space. Its function is as follows. Component of the cytosolic iron-sulfur (Fe-S) protein assembly (CIA) machinery required for the maturation of extramitochondrial Fe-S proteins. Part of an electron transfer chain functioning in an early step of cytosolic Fe-S biogenesis, facilitating the de novo assembly of a [4Fe-4S] cluster on the scaffold complex CFD1-NBP35. Electrons are transferred to DRE2 from NADPH via the FAD- and FMN-containing protein TAH18. TAH18-DRE2 are also required for the assembly of the diferric tyrosyl radical cofactor of ribonucleotide reductase (RNR), probably by providing electrons for reduction during radical cofactor maturation in the catalytic small subunit RNR2. This chain is Fe-S cluster assembly protein DRE2, found in Scheffersomyces stipitis (strain ATCC 58785 / CBS 6054 / NBRC 10063 / NRRL Y-11545) (Yeast).